The chain runs to 947 residues: Glutamate receptor 2.8 (947 aa).

Residues 1–26 (MNPKKNNNTFLSYFVCLFLLLEVGLG) form the signal peptide. Topologically, residues 27–577 (QNQISEIKVG…NTWVFLKPWG (551 aa)) are extracellular. Asn-42, Asn-118, Asn-333, Asn-341, Asn-348, Asn-420, Asn-478, and Asn-524 each carry an N-linked (GlcNAc...) asparagine glycan. Residues 578-598 (LDLWVTTACFFVLIGFVVWLF) form a helical membrane-spanning segment. The Cytoplasmic segment spans residues 599–607 (EHRVNTDFR). A helical membrane pass occupies residues 608-628 (GPPHHQIGTSFWFSFSTMVFA). Residues 629-632 (HREK) are Cytoplasmic-facing. A helical transmembrane segment spans residues 633–653 (VVSNLARFVVVVWCFVVLVLT). The Extracellular segment spans residues 654-819 (QSYTANLTSF…NRLSLRSFWG (166 aa)). Asn-659, Asn-704, Asn-723, and Asn-779 each carry an N-linked (GlcNAc...) asparagine glycan. Residues 820-840 (LFLIAGIASFLALLIFVFLFL) traverse the membrane as a helical segment. Over 841–947 (YENRHTLCDD…ESDIECVVEQ (107 aa)) the chain is Cytoplasmic.

It belongs to the glutamate-gated ion channel (TC 1.A.10.1) family. May form heteromers. As to expression, expressed predominantly in leaves.

The protein localises to the membrane. Glutamate-gated receptor that probably acts as a non-selective cation channel. May be involved in light-signal transduction and calcium homeostasis via the regulation of calcium influx into cells. The polypeptide is Glutamate receptor 2.8 (GLR2.8) (Arabidopsis thaliana (Mouse-ear cress)).